A 294-amino-acid polypeptide reads, in one-letter code: UDP-3-O-acyl-N-acetylglucosamine deacetylase (294 aa).

Residues His75, His232, and Asp236 each coordinate Zn(2+). The active-site Proton donor is His259.

Belongs to the LpxC family. Zn(2+) is required as a cofactor.

The enzyme catalyses a UDP-3-O-[(3R)-3-hydroxyacyl]-N-acetyl-alpha-D-glucosamine + H2O = a UDP-3-O-[(3R)-3-hydroxyacyl]-alpha-D-glucosamine + acetate. It participates in glycolipid biosynthesis; lipid IV(A) biosynthesis; lipid IV(A) from (3R)-3-hydroxytetradecanoyl-[acyl-carrier-protein] and UDP-N-acetyl-alpha-D-glucosamine: step 2/6. Its function is as follows. Catalyzes the hydrolysis of UDP-3-O-myristoyl-N-acetylglucosamine to form UDP-3-O-myristoylglucosamine and acetate, the committed step in lipid A biosynthesis. The sequence is that of UDP-3-O-acyl-N-acetylglucosamine deacetylase from Sulfurimonas denitrificans (strain ATCC 33889 / DSM 1251) (Thiomicrospira denitrificans (strain ATCC 33889 / DSM 1251)).